The primary structure comprises 563 residues: Arginine--tRNA ligase (563 aa).

Positions Pro121 to His131 match the 'HIGH' region motif.

It belongs to the class-I aminoacyl-tRNA synthetase family. Monomer.

Its subcellular location is the cytoplasm. It carries out the reaction tRNA(Arg) + L-arginine + ATP = L-arginyl-tRNA(Arg) + AMP + diphosphate. The polypeptide is Arginine--tRNA ligase (Streptococcus pyogenes serotype M3 (strain ATCC BAA-595 / MGAS315)).